The sequence spans 193 residues: Homeobox protein HD-12 (193 aa).

Residues 123-185 constitute a DNA-binding region (homeobox; TALE-type); it reads SVIRRINFPK…NARRRILPFM (63 aa).

It belongs to the TALE/KNOX homeobox family.

It localises to the nucleus. In Encephalitozoon cuniculi (strain GB-M1) (Microsporidian parasite), this protein is Homeobox protein HD-12 (HD-12).